The following is a 458-amino-acid chain: ATP synthase subunit beta (458 aa).

Residue 148 to 155 coordinates ATP; that stretch reads GGAGVGKT.

This sequence belongs to the ATPase alpha/beta chains family. F-type ATPases have 2 components, CF(1) - the catalytic core - and CF(0) - the membrane proton channel. CF(1) has five subunits: alpha(3), beta(3), gamma(1), delta(1), epsilon(1). CF(0) has three main subunits: a(1), b(2) and c(9-12). The alpha and beta chains form an alternating ring which encloses part of the gamma chain. CF(1) is attached to CF(0) by a central stalk formed by the gamma and epsilon chains, while a peripheral stalk is formed by the delta and b chains.

The protein resides in the cell inner membrane. The enzyme catalyses ATP + H2O + 4 H(+)(in) = ADP + phosphate + 5 H(+)(out). Produces ATP from ADP in the presence of a proton gradient across the membrane. The catalytic sites are hosted primarily by the beta subunits. The polypeptide is ATP synthase subunit beta (Stutzerimonas stutzeri (strain A1501) (Pseudomonas stutzeri)).